A 379-amino-acid chain; its full sequence is Cytochrome b (379 aa).

4 helical membrane passes run 33 to 53, 77 to 98, 113 to 133, and 178 to 198; these read FGSLLGMCLMIQILTGLFLAM, WLIRYLHANGASMFFICLFIHV, WNIGIILFLMTMATAFVGYVL, and FFAFHFILPFIIAAFALVHLL. H83 and H97 together coordinate heme b. Heme b-binding residues include H182 and H196. H201 contacts a ubiquinone. 4 consecutive transmembrane segments (helical) span residues 226 to 246, 288 to 308, 320 to 340, and 347 to 367; these read TKDLLGIFLLLLVLMILALFF, LGGVLALILSILILAAFPLLN, VTQVIYWIFTANLLVLTWIGG, and FTMIGQIASITYLAIIIILMP.

This sequence belongs to the cytochrome b family. The cytochrome bc1 complex contains 11 subunits: 3 respiratory subunits (MT-CYB, CYC1 and UQCRFS1), 2 core proteins (UQCRC1 and UQCRC2) and 6 low-molecular weight proteins (UQCRH/QCR6, UQCRB/QCR7, UQCRQ/QCR8, UQCR10/QCR9, UQCR11/QCR10 and a cleavage product of UQCRFS1). This cytochrome bc1 complex then forms a dimer. Heme b is required as a cofactor.

It is found in the mitochondrion inner membrane. Component of the ubiquinol-cytochrome c reductase complex (complex III or cytochrome b-c1 complex) that is part of the mitochondrial respiratory chain. The b-c1 complex mediates electron transfer from ubiquinol to cytochrome c. Contributes to the generation of a proton gradient across the mitochondrial membrane that is then used for ATP synthesis. In Akodon kofordi (Koford's grass mouse), this protein is Cytochrome b (MT-CYB).